The chain runs to 426 residues: Putative F-box/LRR-repeat protein At4g15060 (426 aa).

The F-box domain maps to Met25–His71. LRR repeat units lie at residues Ser50–Tyr75, Glu80–Phe106, Ile160–Arg187, Val188–Arg213, Thr221–Asp259, Glu265–Ser290, Cys311–Pro337, Cys338–Leu363, and Asp373–Trp399.

The protein is Putative F-box/LRR-repeat protein At4g15060 of Arabidopsis thaliana (Mouse-ear cress).